The following is a 129-amino-acid chain: MTDKWLDTINWSADGLIPAIAQDKNNGKILMVAWMNREALKRTVESGEAVYWSRSRKKLWHKGEESGHTQKISAIHLDCDEDILLLSVEQKGGIACHTGRQSCFFRQLKNGEWVVTEPVIKDPSQIYTK.

D78 is a Mg(2+) binding site. C79 is a Zn(2+) binding site. The Mg(2+) site is built by D80 and D82. The Zn(2+) site is built by C96 and C103.

It belongs to the PRA-CH family. As to quaternary structure, homodimer. The cofactor is Mg(2+). Zn(2+) serves as cofactor.

The protein resides in the cytoplasm. It catalyses the reaction 1-(5-phospho-beta-D-ribosyl)-5'-AMP + H2O = 1-(5-phospho-beta-D-ribosyl)-5-[(5-phospho-beta-D-ribosylamino)methylideneamino]imidazole-4-carboxamide. It functions in the pathway amino-acid biosynthesis; L-histidine biosynthesis; L-histidine from 5-phospho-alpha-D-ribose 1-diphosphate: step 3/9. Catalyzes the hydrolysis of the adenine ring of phosphoribosyl-AMP. This chain is Phosphoribosyl-AMP cyclohydrolase, found in Nitrosomonas europaea (strain ATCC 19718 / CIP 103999 / KCTC 2705 / NBRC 14298).